The primary structure comprises 189 residues: Pyridoxal 5'-phosphate synthase subunit PdxT (189 aa).

An L-glutamine-binding site is contributed by 48-50 (GES). The Nucleophile role is filled by Cys-80. L-glutamine contacts are provided by residues Arg-107 and 136–137 (IR). Active-site charge relay system residues include His-172 and Glu-174.

The protein belongs to the glutaminase PdxT/SNO family. As to quaternary structure, in the presence of PdxS, forms a dodecamer of heterodimers. Only shows activity in the heterodimer.

The enzyme catalyses aldehydo-D-ribose 5-phosphate + D-glyceraldehyde 3-phosphate + L-glutamine = pyridoxal 5'-phosphate + L-glutamate + phosphate + 3 H2O + H(+). It carries out the reaction L-glutamine + H2O = L-glutamate + NH4(+). The protein operates within cofactor biosynthesis; pyridoxal 5'-phosphate biosynthesis. In terms of biological role, catalyzes the hydrolysis of glutamine to glutamate and ammonia as part of the biosynthesis of pyridoxal 5'-phosphate. The resulting ammonia molecule is channeled to the active site of PdxS. The sequence is that of Pyridoxal 5'-phosphate synthase subunit PdxT from Ruminiclostridium cellulolyticum (strain ATCC 35319 / DSM 5812 / JCM 6584 / H10) (Clostridium cellulolyticum).